Reading from the N-terminus, the 99-residue chain is UPF0235 protein PM1313 (99 aa).

It belongs to the UPF0235 family.

The sequence is that of UPF0235 protein PM1313 from Pasteurella multocida (strain Pm70).